The following is a 631-amino-acid chain: Peptidyl-prolyl cis-trans isomerase CYP71 (631 aa).

Residues 26–45 form a disordered region; it reads VEEEEPMVGPGPAPRGKRKR. WD repeat units lie at residues 68-106, 111-150, 201-240, and 257-297; these read MHRD…IEFA, SHLG…MMAM, IHMN…FPED, and KCKT…RRVY. The 155-residue stretch at 474-628 folds into the PPIase cyclophilin-type domain; sequence LPENVIMHTT…QDVKILNVTV (155 aa).

It belongs to the cyclophilin-type PPIase family. As to quaternary structure, interacts with FAS1 and LHP1. Interacts (via WD repeat domain) with histone H3. Ubiquitous. Expressed in the meristems.

The protein localises to the nucleus. The catalysed reaction is [protein]-peptidylproline (omega=180) = [protein]-peptidylproline (omega=0). Functionally, PPIases accelerate the folding of proteins. It catalyzes the cis-trans isomerization of proline imidic peptide bonds in oligopeptides. Histone proline isomerase that increases the rate of cis-trans isomerization of the synthetic histone H3 peptides H3P30 (RKSAP30F-p-nitroanilide) and H3P30K27me3 (RKme3-SAP30F-p-nitroanilide) in the histone H3 N-terminal tail, in vitro. Histone remodeling factor involved in chromatin-based gene silencing. Reinforces H3K27 methylation. Involved in fundamental processes of chromatin assembly and histone modification by mediating the targeting of FAS1 and LHP1 on the chromatin. Required for the formation and development of leaves, for normal phyllotaxy and for the formation, maintenance and activity of root and shoot apical meristems. This is Peptidyl-prolyl cis-trans isomerase CYP71 from Arabidopsis thaliana (Mouse-ear cress).